A 124-amino-acid chain; its full sequence is Putative transmembrane protein FLJ36131 (124 aa).

The Cytoplasmic segment spans residues methionine 1–tyrosine 2. The chain crosses the membrane as a helical span at residues valine 3 to isoleucine 23. The Extracellular portion of the chain corresponds to valine 24 to serine 124. N-linked (GlcNAc...) asparagine glycosylation occurs at asparagine 41.

The protein resides in the membrane. The chain is Putative transmembrane protein FLJ36131 from Homo sapiens (Human).